Here is a 214-residue protein sequence, read N- to C-terminus: MRGKFIVIEGIDGCGKTTQIDEISKWIPTSGLLRGKQKLVKTREPGGSLLGKKIRNLILDNHKDNKPSSLAELLLYSADRAEHISKTISPALENQDWVLSDRFCDSTLAYQGYGRNINLEIIKNIESIVCQGESPDLTIFLEISAEESVLRREKFIPDRMESEGIKFLEKVNEGFKLIAKEKNWTTISALQDINTITNEIKETLLKKFSRVNND.

Residue 10-17 participates in ATP binding; the sequence is GIDGCGKT.

It belongs to the thymidylate kinase family.

The enzyme catalyses dTMP + ATP = dTDP + ADP. Its function is as follows. Phosphorylation of dTMP to form dTDP in both de novo and salvage pathways of dTTP synthesis. This Prochlorococcus marinus subsp. pastoris (strain CCMP1986 / NIES-2087 / MED4) protein is Thymidylate kinase.